The chain runs to 174 residues: Ribosome rescue factor SmrB (174 aa).

The region spanning 96–171 (LDLHGLTQQQ…GDAAILVLIE (76 aa)) is the Smr domain.

It belongs to the SmrB family. As to quaternary structure, associates with collided ribosomes, but not with correctly translating polysomes.

Its function is as follows. Acts as a ribosome collision sensor. Detects stalled/collided disomes (pairs of ribosomes where the leading ribosome is stalled and a second ribosome has collided with it) and endonucleolytically cleaves mRNA at the 5' boundary of the stalled ribosome. Stalled/collided disomes form a new interface (primarily via the 30S subunits) that binds SmrB. Cleaved mRNA becomes available for tmRNA ligation, leading to ribosomal subunit dissociation and rescue of stalled ribosomes. The protein is Ribosome rescue factor SmrB of Tolumonas auensis (strain DSM 9187 / NBRC 110442 / TA 4).